A 470-amino-acid chain; its full sequence is Hydroxymethylglutaryl-CoA synthase (470 aa).

E100 (proton donor/acceptor) is an active-site residue. Catalysis depends on C134, which acts as the Acyl-thioester intermediate. Residues C134, T176, S225, H269, K278, N348, and S382 each coordinate (3S)-3-hydroxy-3-methylglutaryl-CoA. The Proton donor/acceptor role is filled by H269.

The protein belongs to the thiolase-like superfamily. HMG-CoA synthase family.

It catalyses the reaction acetoacetyl-CoA + acetyl-CoA + H2O = (3S)-3-hydroxy-3-methylglutaryl-CoA + CoA + H(+). Its pathway is metabolic intermediate biosynthesis; (R)-mevalonate biosynthesis; (R)-mevalonate from acetyl-CoA: step 2/3. In terms of biological role, hydroxymethylglutaryl-CoA synthase; part of the first module of ergosterol biosynthesis pathway that includes the early steps of the pathway, conserved across all eukaryotes, and which results in the formation of mevalonate from acetyl-coenzyme A (acetyl-CoA). This module also plays a key role in the biosynthesis of triterpenes such as ganoderic acids (GA), a group of highly oxygenated lanostane-type triterpenoids which are well recognized as a main group of unique bioactive compounds in the medicinal mushroom Ganoderma lucidum. In this module, the acetyl-CoA acetyltransferase catalyzes the formation of acetoacetyl-CoA. The hydroxymethylglutaryl-CoA synthase HMGS then condenses acetyl-CoA with acetoacetyl-CoA to form HMG-CoA. The rate-limiting step of the early module is the reduction to mevalonate by the 3-hydroxy-3-methylglutaryl-coenzyme A (HMG-CoA) reductase. This is Hydroxymethylglutaryl-CoA synthase from Ganoderma lucidum (Ling zhi medicinal fungus).